The chain runs to 463 residues: A-type ATP synthase subunit B (463 aa).

The protein belongs to the ATPase alpha/beta chains family. As to quaternary structure, has multiple subunits with at least A(3), B(3), C, D, E, F, H, I and proteolipid K(x).

The protein localises to the cell membrane. Its function is as follows. Component of the A-type ATP synthase that produces ATP from ADP in the presence of a proton gradient across the membrane. The B chain is a regulatory subunit. The protein is A-type ATP synthase subunit B of Methanothermobacter thermautotrophicus (strain ATCC 29096 / DSM 1053 / JCM 10044 / NBRC 100330 / Delta H) (Methanobacterium thermoautotrophicum).